Here is an 89-residue protein sequence, read N- to C-terminus: Small ribosomal subunit protein uS15 (89 aa).

The protein belongs to the universal ribosomal protein uS15 family. Part of the 30S ribosomal subunit. Forms a bridge to the 50S subunit in the 70S ribosome, contacting the 23S rRNA.

Its function is as follows. One of the primary rRNA binding proteins, it binds directly to 16S rRNA where it helps nucleate assembly of the platform of the 30S subunit by binding and bridging several RNA helices of the 16S rRNA. Forms an intersubunit bridge (bridge B4) with the 23S rRNA of the 50S subunit in the ribosome. The polypeptide is Small ribosomal subunit protein uS15 (Erwinia tasmaniensis (strain DSM 17950 / CFBP 7177 / CIP 109463 / NCPPB 4357 / Et1/99)).